Reading from the N-terminus, the 297-residue chain is MDWFHCNQCFRKDGAHFFVTSCGHIFCKKCMTLEKCAVCGNLCKHLALSDNLKPQEKKFFKSPVETALQCFSHISQVWCFQKKQTDLLIAFYKDRITKLEAAVKEAQEMAASQNKELSALRKENGELKKILDILKGSPSCYYGSRLTTPRPVGITSPSQSVAPRPSSHHSSQVVSRSSSMESIPYTVAGMGHVEQGSRGLHVRSTPGDSYTETPSPASTHSLSYRPSSASSGQGVSFRPFFSGDSGHTRVLTPNNSGRRESRTTPESLPGFQLPVLQTFYQQRQMGLARKDGWNISR.

The RING-type zinc finger occupies 6–40 (CNQCFRKDGAHFFVTSCGHIFCKKCMTLEKCAVCG). Positions 87–136 (LLIAFYKDRITKLEAAVKEAQEMAASQNKELSALRKENGELKKILDILKG) form a coiled coil. Disordered regions lie at residues 152 to 179 (VGIT…RSSS) and 198 to 269 (RGLH…ESLP). Positions 163 to 179 (PRPSSHHSSQVVSRSSS) are enriched in low complexity. A compositionally biased stretch (polar residues) spans 206-234 (PGDSYTETPSPASTHSLSYRPSSASSGQG).

As to quaternary structure, homodimer. In terms of processing, autoubiquitinated.

It is found in the chromosome. It catalyses the reaction S-ubiquitinyl-[E2 ubiquitin-conjugating enzyme]-L-cysteine + [acceptor protein]-L-lysine = [E2 ubiquitin-conjugating enzyme]-L-cysteine + N(6)-ubiquitinyl-[acceptor protein]-L-lysine.. The protein operates within protein modification; protein ubiquitination. In terms of biological role, ubiquitin E3 ligase that acts as a crucial factor for crossing-over (CO) formation during meiosis. Essential for normal prophase I progression and for ensuring appropriate CO designation in meiosis. Recruits key components of the cross-over machinery either directly ou indirectly, leading to the activation of the MutL-gamma complex. The function of RNF212B in CO designation is dependent on its catalytic activity. This is E3 ubiquitin-protein ligase RNF212B (Rnf212b) from Mus musculus (Mouse).